The primary structure comprises 172 residues: MTLHVGAEPAPREDDTEDALREPELDLSVQYGDEITSDVRKTLPKRKLIAEWIEPALFASAQLTVRFVGEEEGRTLNAGYRHKDYPTNVLTFAYDAAPDGTVIGDLVLCCPVVEKEAHEQGKPLTAHYAHLLVHGALHAQGYDHETSDEDAAEMEALEVDILAKLGFPNPYQ.

Positions 1–21 (MTLHVGAEPAPREDDTEDALR) are disordered. A compositionally biased stretch (basic and acidic residues) spans 10–21 (APREDDTEDALR). His-134, His-138, and His-144 together coordinate Zn(2+).

The protein belongs to the endoribonuclease YbeY family. Zn(2+) is required as a cofactor.

It is found in the cytoplasm. In terms of biological role, single strand-specific metallo-endoribonuclease involved in late-stage 70S ribosome quality control and in maturation of the 3' terminus of the 16S rRNA. The chain is Endoribonuclease YbeY from Burkholderia lata (strain ATCC 17760 / DSM 23089 / LMG 22485 / NCIMB 9086 / R18194 / 383).